We begin with the raw amino-acid sequence, 252 residues long: tRNA (guanine-N(1)-)-methyltransferase (252 aa).

S-adenosyl-L-methionine-binding positions include glycine 116 and leucine 135–leucine 140.

Belongs to the RNA methyltransferase TrmD family. Homodimer.

Its subcellular location is the cytoplasm. The enzyme catalyses guanosine(37) in tRNA + S-adenosyl-L-methionine = N(1)-methylguanosine(37) in tRNA + S-adenosyl-L-homocysteine + H(+). Its function is as follows. Specifically methylates guanosine-37 in various tRNAs. This is tRNA (guanine-N(1)-)-methyltransferase from Limosilactobacillus fermentum (strain NBRC 3956 / LMG 18251) (Lactobacillus fermentum).